A 349-amino-acid polypeptide reads, in one-letter code: 4-hydroxy-3-methylbut-2-en-1-yl diphosphate synthase (flavodoxin) (349 aa).

[4Fe-4S] cluster-binding residues include C264, C267, C299, and E306.

The protein belongs to the IspG family. [4Fe-4S] cluster is required as a cofactor.

The enzyme catalyses (2E)-4-hydroxy-3-methylbut-2-enyl diphosphate + oxidized [flavodoxin] + H2O + 2 H(+) = 2-C-methyl-D-erythritol 2,4-cyclic diphosphate + reduced [flavodoxin]. Its pathway is isoprenoid biosynthesis; isopentenyl diphosphate biosynthesis via DXP pathway; isopentenyl diphosphate from 1-deoxy-D-xylulose 5-phosphate: step 5/6. Converts 2C-methyl-D-erythritol 2,4-cyclodiphosphate (ME-2,4cPP) into 1-hydroxy-2-methyl-2-(E)-butenyl 4-diphosphate. This Clostridium acetobutylicum (strain ATCC 824 / DSM 792 / JCM 1419 / IAM 19013 / LMG 5710 / NBRC 13948 / NRRL B-527 / VKM B-1787 / 2291 / W) protein is 4-hydroxy-3-methylbut-2-en-1-yl diphosphate synthase (flavodoxin).